Reading from the N-terminus, the 835-residue chain is Beta-galactosidase (835 aa).

An N-terminal signal peptide occupies residues M1–A22. Residue E180 is the Proton donor of the active site. Residue E249 is the Nucleophile of the active site. The SUEL-type lectin domain maps to R749 to S835.

This sequence belongs to the glycosyl hydrolase 35 family.

It carries out the reaction Hydrolysis of terminal non-reducing beta-D-galactose residues in beta-D-galactosides.. Functionally, involved in cell wall degradation. Degrades polysaccharides containing beta-(1--&gt;4)-linked galactans, acting as an exo-(1--&gt;4)-beta-D-galactanase. The chain is Beta-galactosidase from Solanum lycopersicum (Tomato).